Reading from the N-terminus, the 473-residue chain is Dihydrolipoyl dehydrogenase (473 aa).

FAD is bound by residues 36-45 (ERYDKLGGVC), lysine 54, and alanine 117. The cysteines at positions 45 and 50 are disulfide-linked. NAD(+) is bound by residues 182–186 (GSGII), aspartate 205, and 270–273 (AIGR). Aspartate 313 and alanine 321 together coordinate FAD. The active-site Proton acceptor is histidine 445.

Belongs to the class-I pyridine nucleotide-disulfide oxidoreductase family. Homodimer. It depends on FAD as a cofactor.

It is found in the cytoplasm. It catalyses the reaction N(6)-[(R)-dihydrolipoyl]-L-lysyl-[protein] + NAD(+) = N(6)-[(R)-lipoyl]-L-lysyl-[protein] + NADH + H(+). Lipoamide dehydrogenase is a component of the alpha-ketoacid dehydrogenase complexes. In Buchnera aphidicola subsp. Acyrthosiphon pisum (strain APS) (Acyrthosiphon pisum symbiotic bacterium), this protein is Dihydrolipoyl dehydrogenase (lpdA).